The primary structure comprises 330 residues: uncharacterized protein (330 aa).

Transmembrane regions (helical) follow at residues 27–47, 56–76, 90–110, 119–139, 147–167, 176–196, 206–226, 243–263, 270–290, and 294–314; these read MGAYVSLAAAMAIVGSSVVVG, VFLSSGLRFLIASVVLLMLLF, VFVLLVQSFTGVFLFSICLLY, ESGILTSTTPMLIGILSFFLL, TLIGILLAVCGVMAINLFGAG, LFGNMLIIAAVIGEALFTLMA, LAISTFVSLFGFLFFLPFALF, YVLYYALFVTVLAFYLWYSGV, VSGIFTSVLPVSAVILSGVIL, and FEFVHFIGIACVIGGIFVTVI. EamA domains lie at 38-163 and 187-314; these read AIVG…AINL and IGEA…VTVI.

The protein belongs to the EamA transporter family.

It is found in the cell membrane. This is an uncharacterized protein from Bacillus subtilis (strain 168).